The primary structure comprises 200 residues: Cysteine-rich venom protein VAR8 (200 aa).

A signal peptide spans 1–22 (MILLKLYLTLAAILCQSRGTTS). Positions 41–169 (NKHNDLRRTV…PLKYFLVCQY (129 aa)) constitute an SCP domain. Cystine bridges form between Cys-77-Cys-156, Cys-95-Cys-170, Cys-151-Cys-167, and Cys-189-Cys-196.

This sequence belongs to the CRISP family. Post-translationally, contains 8 disulfide bonds. Expressed by the venom gland.

Its subcellular location is the secreted. Blocks ryanodine receptors, and potassium channels. In Varanus acanthurus (Ridge-tailed monitor), this protein is Cysteine-rich venom protein VAR8.